The following is a 406-amino-acid chain: Cysteine--tRNA ligase (406 aa).

A Zn(2+)-binding site is contributed by cysteine 16. The 'HIGH' region motif lies at 18 to 28 (PTVYSDVHIGN). Zn(2+) is bound by residues cysteine 192, histidine 218, and glutamate 222. Positions 250–254 (KMAKS) match the 'KMSKS' region motif. ATP is bound at residue lysine 253.

It belongs to the class-I aminoacyl-tRNA synthetase family. As to quaternary structure, monomer. Zn(2+) is required as a cofactor.

It localises to the cytoplasm. It catalyses the reaction tRNA(Cys) + L-cysteine + ATP = L-cysteinyl-tRNA(Cys) + AMP + diphosphate. The chain is Cysteine--tRNA ligase from Mesomycoplasma hyopneumoniae (strain J / ATCC 25934 / NCTC 10110) (Mycoplasma hyopneumoniae).